A 69-amino-acid polypeptide reads, in one-letter code: ATP synthase F(0) complex subunit e, mitochondrial (69 aa).

Lysine 34 is subject to N6-acetyllysine. Serine 66 is modified (phosphoserine).

The protein belongs to the ATPase e subunit family. In terms of assembly, component of the ATP synthase complex composed at least of ATP5F1A/subunit alpha, ATP5F1B/subunit beta, ATP5MC1/subunit c (homooctomer), MT-ATP6/subunit a, MT-ATP8/subunit 8, ATP5ME/subunit e, ATP5MF/subunit f, ATP5MG/subunit g, ATP5MK/subunit k, ATP5MJ/subunit j, ATP5F1C/subunit gamma, ATP5F1D/subunit delta, ATP5F1E/subunit epsilon, ATP5PF/subunit F6, ATP5PB/subunit b, ATP5PD/subunit d, ATP5PO/subunit OSCP. ATP synthase complex consists of a soluble F(1) head domain (subunits alpha(3) and beta(3)) - the catalytic core - and a membrane F(0) domain - the membrane proton channel (subunits c, a, 8, e, f, g, k and j). These two domains are linked by a central stalk (subunits gamma, delta, and epsilon) rotating inside the F1 region and a stationary peripheral stalk (subunits F6, b, d, and OSCP).

The protein localises to the mitochondrion. Its subcellular location is the mitochondrion inner membrane. Functionally, subunit e, of the mitochondrial membrane ATP synthase complex (F(1)F(0) ATP synthase or Complex V) that produces ATP from ADP in the presence of a proton gradient across the membrane which is generated by electron transport complexes of the respiratory chain. ATP synthase complex consist of a soluble F(1) head domain - the catalytic core - and a membrane F(1) domain - the membrane proton channel. These two domains are linked by a central stalk rotating inside the F(1) region and a stationary peripheral stalk. During catalysis, ATP synthesis in the catalytic domain of F(1) is coupled via a rotary mechanism of the central stalk subunits to proton translocation. In vivo, can only synthesize ATP although its ATP hydrolase activity can be activated artificially in vitro. Part of the complex F(0) domain. The chain is ATP synthase F(0) complex subunit e, mitochondrial from Homo sapiens (Human).